Here is a 201-residue protein sequence, read N- to C-terminus: Small ribosomal subunit protein uS4c (201 aa).

Positions 20 to 44 (GLTSKRPKAGSDLRNQSRSGKKSQY) are disordered. The S4 RNA-binding domain maps to 89–152 (MRLDNILFRL…NSRTLVQNLL (64 aa)).

Belongs to the universal ribosomal protein uS4 family. Part of the 30S ribosomal subunit. Contacts protein S5. The interaction surface between S4 and S5 is involved in control of translational fidelity.

It is found in the plastid. It localises to the chloroplast. In terms of biological role, one of the primary rRNA binding proteins, it binds directly to 16S rRNA where it nucleates assembly of the body of the 30S subunit. With S5 and S12 plays an important role in translational accuracy. The sequence is that of Small ribosomal subunit protein uS4c (rps4) from Barbarea verna (Land cress).